The sequence spans 1136 residues: MGISRNRLVPGLVGLAASAAIVLPLGIGMPVSSATAEENAPVQTLNVDYGTTTGDFYGGSSGMLYGLGDEGSPTDAILDGARVQVTSQKPADGLQHPSADVLAVENQFFNNGGEELVVNLQDWYPDWSYNGGKRPGDTRSYKLDVDPNDAQYGTYTDNAPNDRWDFDEVLEVVMNKILANTSHPDNIVFMPFNEPDGGNWYASGDNASADIYKQFLTDWNDAYATIQKVWNQYKSGEKTNVNGVKPTADHALIAGPGDSVWRANRTKALLESSKAANTLPDVIVWHELGNGSLKNYRSHYNQYRSFEQELGITPRAINISEFGELRDMSVPGQLIQWMSMFESTKVQAQTAYWNYAGNLNDNMARANSANGGWWLYKWYGDLRGTQTVKVTSEHPDSVDNLQGVAAIDTKNRKATVLYGGANDATKIGANIPVTVHMTGLDQSVFGESVDVQVRENAYTGPDGVAATPRVVNVLSDQKLVNGTLDVTTTSIDRYAGYQLVVTPHQDVATSLDNAENGRSLQAIEAEDTTLSDGAKAYTKSDNTGSWGNFMFSGNGDVGNFKNGAKMTWNVDVPADGAYRLQLITAPAGFPGVNHVYVDGKSVGDLNVPAELALKEAAKWKYRGSAEIVLDGLTKGKHAITVEATDLDNESDKLLLYQVSRGDGTPVDQVTYPASDMRLDSGAVLAYDGNGTNGFANLNGGRADVFAHAWEAGYQNVTIAYNAAKGAHFVLSVNGQSAATVTAQSDGAQTSIVRVAFSEGINQLTLSGAAGVRVASVTTARASESDSKAIRFEAEDAQLSGGAKVQKDDASDASGKSFVAGLGNQFVTNESGKAGYGDQTRVEADANHVPTVAQNNKGTMTVTGVPAGAYNMVVRFSNDAFIGSHSYNPQVVDLGLQVREGDQEIARGSFRYTYTEKHFMNRSVTVTTHGGALTLGNWDEVGSRKAAVSWGVAPNVDSITFYPITDGNVIDSVSGVTVSGEGVSADGKASLKVGETLSLNASVTPDSVADKTVQWTSSDEQVATVDEHGVVKGVKAGTVTITATSVADSSRSGSVEVTVAEDSEQKPSGGDGDNNGEQTGKPDGNTGGQTSDSDAGADSGNNQKHMPLTGAAVAAVAGVAVLLAGAGLLLKRLRSRS.

An N-terminal signal peptide occupies residues 1–36 (MGISRNRLVPGLVGLAASAAIVLPLGIGMPVSSATA). The Proton donor role is filled by glutamate 194. Catalysis depends on glutamate 321, which acts as the Nucleophile. 2 consecutive CBM6 domains span residues 521 to 656 (QAIE…LLLY) and 669 to 779 (VTYP…VTTA). The 59-residue stretch at 987 to 1045 (KASLKVGETLSLNASVTPDSVADKTVQWTSSDEQVATVDEHGVVKGVKAGTVTITATSV) folds into the BIG2 domain. A disordered region spans residues 1049–1104 (SRSGSVEVTVAEDSEQKPSGGDGDNNGEQTGKPDGNTGGQTSDSDAGADSGNNQKH). Residues 1087 to 1103 (GQTSDSDAGADSGNNQK) show a composition bias toward polar residues. Residues 1109–1129 (GAAVAAVAGVAVLLAGAGLLL) form a helical membrane-spanning segment.

It belongs to the glycosyl hydrolase 39 family.

The protein resides in the cell membrane. It localises to the secreted. It is found in the cell wall. It catalyses the reaction Hydrolysis of alpha-D-Galp-(1-&gt;3)-L-Araf disaccharides from non-reducing terminals in branches of type II arabinogalactan attached to proteins.. Functionally, hydrolase involved in the degradation of the gum arabic arabinogalactan protein (AGP). Catalyzes the release of 3-O-alpha-D-galactopyranosyl-L-arabinose (alpha-D-Galp-(1-&gt;3)-L-Ara) from gum arabic AGP. Can also release 3-O-beta-L-arabinopyranosyl-L-arabinose (beta-L-Arap-(1-&gt;3)-L-Ara) from gum arabic AGP and larch AGP, but the alpha-D-Galp-(1-&gt;3)-L-Ara release activity is 594-fold higher than the beta-L-Arap-(1-&gt;3)-L-Ara release activity. Exhibits no reactivity toward p-nitrophenyl (pNP)-alpha-Araf or any other tested pNP substrate. Plays a crucial role in gum arabic AGP assimilation in B.longum. This is 3-O-alpha-D-galactosyl-alpha-L-arabinofuranosidase from Bifidobacterium longum subsp. longum.